Reading from the N-terminus, the 269-residue chain is DNA-binding protein RFXANK (269 aa).

Residues methionine 1 to aspartate 36 form a disordered region. ANK repeat units lie at residues leucine 88–asparagine 127, arginine 132–isoleucine 161, glutamate 165–isoleucine 194, asparagine 198–threonine 227, and serine 231–glutamine 260.

In terms of assembly, forms homodimers. The RFX heterotetrameric complex consists of 2 molecules of RFX5 and one each of RFXAP and RFX-B/RFXANK; with each subunit representing a separate complementation group. Interacts (via ankyrin repeats) with RFX5 (via PxLPxI/L motif); the interaction is direct. RFX forms cooperative DNA binding complexes with X2BP and CBF/NF-Y. RFX associates with CIITA to form an active transcriptional complex. Interacts with RAF1. Interacts with RFX7. Phosphorylated by RAF1. In terms of tissue distribution, expressed primarily in thymus, lung and testis.

It localises to the cytoplasm. It is found in the nucleus. Activates transcription from class II MHC promoters. Activation requires the activity of the MHC class II transactivator/CIITA. May regulate other genes in the cell. RFX binds the X1 box of MHC-II promoters. May also potentiate the activation of RAF1. The sequence is that of DNA-binding protein RFXANK (Rfxank) from Mus musculus (Mouse).